The chain runs to 390 residues: GTPase Obg (390 aa).

Residues M1 to L159 enclose the Obg domain. A disordered region spans residues N127–G147. Residues R129–T145 are compositionally biased toward polar residues. The OBG-type G domain occupies A160–I333. GTP contacts are provided by residues G166–S173, F191–V195, D213–G216, N283–D286, and S314–A316. Residues S173 and T193 each coordinate Mg(2+).

It belongs to the TRAFAC class OBG-HflX-like GTPase superfamily. OBG GTPase family. Monomer. Requires Mg(2+) as cofactor.

Its subcellular location is the cytoplasm. An essential GTPase which binds GTP, GDP and possibly (p)ppGpp with moderate affinity, with high nucleotide exchange rates and a fairly low GTP hydrolysis rate. Plays a role in control of the cell cycle, stress response, ribosome biogenesis and in those bacteria that undergo differentiation, in morphogenesis control. The chain is GTPase Obg from Escherichia fergusonii (strain ATCC 35469 / DSM 13698 / CCUG 18766 / IAM 14443 / JCM 21226 / LMG 7866 / NBRC 102419 / NCTC 12128 / CDC 0568-73).